Consider the following 157-residue polypeptide: Ribosome maturation factor RimP (157 aa).

The protein belongs to the RimP family.

The protein localises to the cytoplasm. Its function is as follows. Required for maturation of 30S ribosomal subunits. This Bacillus pumilus (strain SAFR-032) protein is Ribosome maturation factor RimP.